The chain runs to 892 residues: Protein translocase subunit SecA (892 aa).

Residues Q89, 107 to 111, and D517 contribute to the ATP site; that span reads GEGKT. Zn(2+)-binding residues include C879, C881, C890, and H891.

Belongs to the SecA family. As to quaternary structure, monomer and homodimer. Part of the essential Sec protein translocation apparatus which comprises SecA, SecYEG and auxiliary proteins SecDF-YajC and YidC. Zn(2+) serves as cofactor.

It is found in the cell inner membrane. It localises to the cytoplasm. It catalyses the reaction ATP + H2O + cellular proteinSide 1 = ADP + phosphate + cellular proteinSide 2.. Its function is as follows. Part of the Sec protein translocase complex. Interacts with the SecYEG preprotein conducting channel. Has a central role in coupling the hydrolysis of ATP to the transfer of proteins into and across the cell membrane, serving as an ATP-driven molecular motor driving the stepwise translocation of polypeptide chains across the membrane. This chain is Protein translocase subunit SecA, found in Ruthia magnifica subsp. Calyptogena magnifica.